The sequence spans 336 residues: MSLPEFSMRGLLESGAHFGHQAHRWNPKMAPYIFGARNNIHIIDLAQTVPLLHQALKAISDTVARGGRVLFVGTKRQAQEAIADAAQRSAQYYVNSRWLGGMLTNWKTISASIQRLRKLDEILASGAGGLTKKERLMMSRERDKLEKALGGIKDMGGVPDLIFVIDTNKEQLAIQEAERLHIPVAAILDTNCDPDGITYPIPGNDDAGRAISLYCDLIARAALDGISRSQGMGGFDAGELEAPVEDLPPVEGEYEAAPTEIFELLDAPRGAPDDLAKLPGSGPQIVKKLNDAGIFHYWQVAAMTPEDVAKLDHDLKLSGRIERDGWVNQARSLIAS.

Belongs to the universal ribosomal protein uS2 family.

The polypeptide is Small ribosomal subunit protein uS2 (Beijerinckia indica subsp. indica (strain ATCC 9039 / DSM 1715 / NCIMB 8712)).